A 190-amino-acid chain; its full sequence is Cathelicidin-3 (190 aa).

Residues Met1–Ala29 form the signal peptide. Gln30 is subject to Pyrrolidone carboxylic acid. The propeptide occupies Gln30 to Val130. Cystine bridges form between Cys85/Cys96 and Cys107/Cys124. Positions Leu133–Pro151 are enriched in basic residues. The tract at residues Leu133–Leu190 is disordered. Over residues Trp172–Leu190 the composition is skewed to pro residues.

This sequence belongs to the cathelicidin family.

It localises to the secreted. In terms of biological role, exerts, in vitro, a potent antimicrobial activity. Probably due to an impairment of the function of the respiratory chain and of energy-dependent activities in the inner membrane of susceptible microorganisms. In Ovis aries (Sheep), this protein is Cathelicidin-3 (CATHL3).